Here is an 81-residue protein sequence, read N- to C-terminus: Small ribosomal subunit protein uS17 (81 aa).

The protein belongs to the universal ribosomal protein uS17 family. Part of the 30S ribosomal subunit.

In terms of biological role, one of the primary rRNA binding proteins, it binds specifically to the 5'-end of 16S ribosomal RNA. The sequence is that of Small ribosomal subunit protein uS17 from Trichormus variabilis (strain ATCC 29413 / PCC 7937) (Anabaena variabilis).